The sequence spans 388 residues: Diacylglycerol O-acyltransferase 2 (388 aa).

Topologically, residues 1–69 (MKTLIAAYSG…NRSKVEKHLQ (69 aa)) are cytoplasmic. The helical transmembrane segment at 70–88 (VISVLQWVLSFLVLGVACS) threads the bilayer. The Lumenal segment spans residues 89–92 (VILM). A helical transmembrane segment spans residues 93–112 (YTFCTDCWLIAALYFTWLAF). Residues 113 to 388 (DWNTPKKGGR…LPETEVLEVN (276 aa)) lie on the Cytoplasmic side of the membrane.

The protein belongs to the diacylglycerol acyltransferase family. Forms multimeric complexes consisting of several DGAT2 subunits. Interacts with SLC27A1 and this interaction is enhanced in the presence of ZFYVE1.

It localises to the endoplasmic reticulum membrane. The protein resides in the lipid droplet. The protein localises to the cytoplasm. Its subcellular location is the perinuclear region. It catalyses the reaction an acyl-CoA + a 1,2-diacyl-sn-glycerol = a triacyl-sn-glycerol + CoA. The enzyme catalyses all-trans-retinol + an acyl-CoA = an all-trans-retinyl ester + CoA. The catalysed reaction is 2-(9Z-octadecenoyl)-glycerol + (9Z)-octadecenoyl-CoA = 1,2-di-(9Z-octadecenoyl)-sn-glycerol + CoA. It carries out the reaction 1,2-di-(9Z-octadecenoyl)-sn-glycerol + (9Z)-octadecenoyl-CoA = 1,2,3-tri-(9Z-octadecenoyl)-glycerol + CoA. It catalyses the reaction all-trans-retinol + hexadecanoyl-CoA = all-trans-retinyl hexadecanoate + CoA. The enzyme catalyses 1-O-(9Z-octadecenyl)-glycerol + (9Z)-octadecenoyl-CoA = 1-O-(9Z-octadecyl)-3-(9Z-octadecenoyl)-glycerol + CoA. The catalysed reaction is 1-(9Z-octadecenoyl)-glycerol + (9Z)-octadecenoyl-CoA = 1,2-di-(9Z-octadecenoyl)-glycerol + CoA. It carries out the reaction 1,2-di-(9Z-octadecenoyl)-sn-glycerol + hexadecanoyl-CoA = 1,2-di-(9Z)-octadecenoyl-3-hexadecanoyl-sn-glycerol + CoA. It catalyses the reaction 1,3-di-(9Z-octadecenoyl)-glycerol + (9Z)-octadecenoyl-CoA = 1,2,3-tri-(9Z-octadecenoyl)-glycerol + CoA. The enzyme catalyses 2,3-di-(9Z)-octadecenoyl-sn-glycerol + (9Z)-octadecenoyl-CoA = 1,2,3-tri-(9Z-octadecenoyl)-glycerol + CoA. The catalysed reaction is 2-(9Z-octadecenoyl)-glycerol + hexadecanoyl-CoA = 1-hexadecanoyl-2-(9Z-octadecenoyl)-sn-glycerol + CoA. It participates in glycerolipid metabolism; triacylglycerol biosynthesis. With respect to regulation, inhibited by niacin. Essential acyltransferase that catalyzes the terminal and only committed step in triacylglycerol synthesis by using diacylglycerol and fatty acyl CoA as substrates. Required for synthesis and storage of intracellular triglycerides. Probably plays a central role in cytosolic lipid accumulation. In liver, is primarily responsible for incorporating endogenously synthesized fatty acids into triglycerides. Also functions as an acyl-CoA retinol acyltransferase (ARAT). Also able to use 1-monoalkylglycerol (1-MAkG) as an acyl acceptor for the synthesis of monoalkyl-monoacylglycerol (MAMAG). The polypeptide is Diacylglycerol O-acyltransferase 2 (Rattus norvegicus (Rat)).